The primary structure comprises 433 residues: Enolase (433 aa).

Q167 lines the (2R)-2-phosphoglycerate pocket. E209 acts as the Proton donor in catalysis. Mg(2+)-binding residues include D246, E291, and D318. 4 residues coordinate (2R)-2-phosphoglycerate: K343, R372, S373, and K394. K343 acts as the Proton acceptor in catalysis.

This sequence belongs to the enolase family. As to quaternary structure, component of the RNA degradosome, a multiprotein complex involved in RNA processing and mRNA degradation. Mg(2+) serves as cofactor.

Its subcellular location is the cytoplasm. It localises to the secreted. The protein resides in the cell surface. The catalysed reaction is (2R)-2-phosphoglycerate = phosphoenolpyruvate + H2O. It functions in the pathway carbohydrate degradation; glycolysis; pyruvate from D-glyceraldehyde 3-phosphate: step 4/5. Functionally, catalyzes the reversible conversion of 2-phosphoglycerate (2-PG) into phosphoenolpyruvate (PEP). It is essential for the degradation of carbohydrates via glycolysis. This chain is Enolase, found in Marinomonas sp. (strain MWYL1).